A 564-amino-acid chain; its full sequence is Bifunctional protein CrtB/UppS (564 aa).

Residue Asp329 is part of the active site. Asp329 contributes to the Mg(2+) binding site. Residues 330–333, Trp334, His346, and 374–376 each bind substrate; these read GNRR and STE. Catalysis depends on Asn377, which acts as the Proton acceptor. Residues Trp378, Arg380, Arg497, and 502-504 each bind substrate; that span reads RIS. A Mg(2+)-binding site is contributed by Glu515.

It in the N-terminal section; belongs to the phytoene/squalene synthase family. In the C-terminal section; belongs to the UPP synthase family. As to quaternary structure, homodimer. Mg(2+) serves as cofactor.

The catalysed reaction is 2 (2E,6E,10E)-geranylgeranyl diphosphate = 15-cis-phytoene + 2 diphosphate. Its pathway is carotenoid biosynthesis; phytoene biosynthesis; all-trans-phytoene from geranylgeranyl diphosphate: step 1/1. Catalyzes the reaction from prephytoene diphosphate to phytoene. Functionally, catalyzes the condensation of isopentenyl diphosphate (IPP) with allylic pyrophosphates generating different type of terpenoids. The sequence is that of Bifunctional protein CrtB/UppS (crtB/uppS3) from Streptomyces coelicolor (strain ATCC BAA-471 / A3(2) / M145).